Here is a 490-residue protein sequence, read N- to C-terminus: Sporulation-specific protein 1 (490 aa).

In terms of domain architecture, Protein kinase spans 18-272; sequence YSIQSCIGRG…AYNLLSFEFV (255 aa). Residues 24–32 and lysine 47 each bind ATP; that span reads IGRGNFGDV. Catalysis depends on aspartate 141, which acts as the Proton acceptor.

It belongs to the protein kinase superfamily. STE Ser/Thr protein kinase family. STE20 subfamily.

The protein localises to the nucleus. It is found in the cytoplasm. It carries out the reaction L-seryl-[protein] + ATP = O-phospho-L-seryl-[protein] + ADP + H(+). The catalysed reaction is L-threonyl-[protein] + ATP = O-phospho-L-threonyl-[protein] + ADP + H(+). Serine/threonine protein kinase required for spore wall development. The chain is Sporulation-specific protein 1 (SPS1) from Saccharomyces cerevisiae (strain ATCC 204508 / S288c) (Baker's yeast).